The sequence spans 350 residues: Probable 2-dehydropantoate 2-reductase (350 aa).

Residues 9–14 (GAGSIG) and Asn115 each bind NADP(+). Asn115 contacts substrate. Lys213 (proton donor) is an active-site residue. Substrate-binding residues include Asn217, Asn221, and Ser295. NADP(+) is bound at residue Glu307.

Belongs to the ketopantoate reductase family.

It catalyses the reaction (R)-pantoate + NADP(+) = 2-dehydropantoate + NADPH + H(+). It functions in the pathway cofactor biosynthesis; (R)-pantothenate biosynthesis; (R)-pantoate from 3-methyl-2-oxobutanoate: step 2/2. Its function is as follows. Catalyzes the NADPH-dependent reduction of ketopantoate into pantoic acid. This Schizosaccharomyces pombe (strain 972 / ATCC 24843) (Fission yeast) protein is Probable 2-dehydropantoate 2-reductase.